The chain runs to 147 residues: Protein LOL4 (147 aa).

Putative zinc finger stretches follow at residues 4–34 (QLICSGCRRVVQYRRGVAGVCCPGCNTLTAV), 44–74 (ELICSGCPTLLFYNRGASNIRCPSCNRLNST), and 82–112 (HLTCGQCRTTLMHPPGASTVQCATCRYVNHV).

The protein localises to the nucleus. In terms of biological role, putative zinc finger that may be involved in programmed cell death and defense response. This is Protein LOL4 (LOL4) from Oryza sativa subsp. japonica (Rice).